The chain runs to 69 residues: Conotoxin reg3f (69 aa).

The signal sequence occupies residues 1 to 20 (MMSKLGVLLTICLLLFPLSA). Residues 21 to 52 (LPLDGDQPADQPAERMQDISPEQNPLFHPDKR) constitute a propeptide that is removed on maturation. Disulfide bonds link cysteine 54/cysteine 68, cysteine 55/cysteine 66, and cysteine 60/cysteine 69. Residue cysteine 69 is modified to Cysteine amide.

In terms of tissue distribution, expressed by the venom duct.

It localises to the secreted. The chain is Conotoxin reg3f from Conus regius (Crown cone).